Reading from the N-terminus, the 981-residue chain is Serine/threonine-protein kinase D1044.8 (981 aa).

Residues 453-725 (YELLDQLGAG…MCGVRLLEYL (273 aa)) form the Protein kinase domain. ATP is bound by residues 459–467 (LGAGAFGCV) and lysine 488. Catalysis depends on aspartate 591, which acts as the Proton acceptor. Positions 735-746 (TSDMTASQSSYN) are enriched in polar residues. Disordered regions lie at residues 735–802 (TSDM…PSSI) and 823–847 (IPSRRRVQTCSTEHPARSSSSTELK). Residues 752-762 (SPSSLNSSTSS) show a composition bias toward low complexity. The span at 830–847 (QTCSTEHPARSSSSTELK) shows a compositional bias: polar residues.

This sequence belongs to the protein kinase superfamily. NEK Ser/Thr protein kinase family. NIMA subfamily. It depends on Mg(2+) as a cofactor.

It carries out the reaction L-seryl-[protein] + ATP = O-phospho-L-seryl-[protein] + ADP + H(+). The catalysed reaction is L-threonyl-[protein] + ATP = O-phospho-L-threonyl-[protein] + ADP + H(+). In Caenorhabditis elegans, this protein is Serine/threonine-protein kinase D1044.8 (nekl-4).